The chain runs to 149 residues: Transcriptional regulator MraZ (149 aa).

2 consecutive SpoVT-AbrB domains span residues 6–52 and 81–124; these read RSHR…PLPD and AELM…DQGR.

Belongs to the MraZ family. As to quaternary structure, forms oligomers.

The protein resides in the cytoplasm. The protein localises to the nucleoid. The sequence is that of Transcriptional regulator MraZ from Nitratidesulfovibrio vulgaris (strain DSM 19637 / Miyazaki F) (Desulfovibrio vulgaris).